A 144-amino-acid chain; its full sequence is D-aminoacyl-tRNA deacylase (144 aa).

The Gly-cisPro motif, important for rejection of L-amino acids motif lies at 136–137 (GP).

The protein belongs to the DTD family. As to quaternary structure, homodimer.

It localises to the cytoplasm. The catalysed reaction is glycyl-tRNA(Ala) + H2O = tRNA(Ala) + glycine + H(+). The enzyme catalyses a D-aminoacyl-tRNA + H2O = a tRNA + a D-alpha-amino acid + H(+). An aminoacyl-tRNA editing enzyme that deacylates mischarged D-aminoacyl-tRNAs. Also deacylates mischarged glycyl-tRNA(Ala), protecting cells against glycine mischarging by AlaRS. Acts via tRNA-based rather than protein-based catalysis; rejects L-amino acids rather than detecting D-amino acids in the active site. By recycling D-aminoacyl-tRNA to D-amino acids and free tRNA molecules, this enzyme counteracts the toxicity associated with the formation of D-aminoacyl-tRNA entities in vivo and helps enforce protein L-homochirality. In Haemophilus influenzae (strain PittEE), this protein is D-aminoacyl-tRNA deacylase.